The primary structure comprises 290 residues: ATP synthase gamma chain (290 aa).

It belongs to the ATPase gamma chain family. In terms of assembly, F-type ATPases have 2 components, CF(1) - the catalytic core - and CF(0) - the membrane proton channel. CF(1) has five subunits: alpha(3), beta(3), gamma(1), delta(1), epsilon(1). CF(0) has three main subunits: a, b and c.

Its subcellular location is the cell membrane. Functionally, produces ATP from ADP in the presence of a proton gradient across the membrane. The gamma chain is believed to be important in regulating ATPase activity and the flow of protons through the CF(0) complex. This Buchnera aphidicola subsp. Acyrthosiphon pisum (strain 5A) protein is ATP synthase gamma chain.